The primary structure comprises 216 residues: Fibroblast growth factor 17 (216 aa).

A signal peptide spans 1 to 22; it reads MGAARLLPNLTLCLQLLILCCQ. Asparagine 137 is a glycosylation site (N-linked (GlcNAc...) asparagine). Residues 195–216 are disordered; that stretch reads FEFVGSAPTRRTKRTRRPQSQT. Residues 204–216 show a composition bias toward basic residues; the sequence is RRTKRTRRPQSQT.

Belongs to the heparin-binding growth factors family. In terms of assembly, interacts with FGFR3 and FGFR4.

The protein resides in the secreted. Plays an important role in the regulation of embryonic development and as signaling molecule in the induction and patterning of the embryonic brain. Required for normal brain development. This chain is Fibroblast growth factor 17 (Fgf17), found in Mus musculus (Mouse).